A 163-amino-acid polypeptide reads, in one-letter code: Cyclic pyranopterin monophosphate synthase (163 aa).

Residues 75–77 (LCH) and 115–116 (ME) each bind substrate. Residue aspartate 130 is part of the active site.

This sequence belongs to the MoaC family. As to quaternary structure, homohexamer; trimer of dimers.

It carries out the reaction (8S)-3',8-cyclo-7,8-dihydroguanosine 5'-triphosphate = cyclic pyranopterin phosphate + diphosphate. Its pathway is cofactor biosynthesis; molybdopterin biosynthesis. Its function is as follows. Catalyzes the conversion of (8S)-3',8-cyclo-7,8-dihydroguanosine 5'-triphosphate to cyclic pyranopterin monophosphate (cPMP). The sequence is that of Cyclic pyranopterin monophosphate synthase from Variovorax paradoxus (strain S110).